The chain runs to 112 residues: Putative pterin-4-alpha-carbinolamine dehydratase (112 aa).

Belongs to the pterin-4-alpha-carbinolamine dehydratase family.

The enzyme catalyses (4aS,6R)-4a-hydroxy-L-erythro-5,6,7,8-tetrahydrobiopterin = (6R)-L-erythro-6,7-dihydrobiopterin + H2O. In Shewanella sp. (strain MR-4), this protein is Putative pterin-4-alpha-carbinolamine dehydratase.